The primary structure comprises 196 residues: Putative NADH dehydrogenase/NAD(P)H nitroreductase PST_3601 (196 aa).

Belongs to the nitroreductase family. HadB/RutE subfamily. It depends on FMN as a cofactor.

This Stutzerimonas stutzeri (strain A1501) (Pseudomonas stutzeri) protein is Putative NADH dehydrogenase/NAD(P)H nitroreductase PST_3601.